The following is a 131-amino-acid chain: Small ribosomal subunit protein uS8 (131 aa).

It belongs to the universal ribosomal protein uS8 family. In terms of assembly, part of the 30S ribosomal subunit. Contacts proteins S5 and S12.

In terms of biological role, one of the primary rRNA binding proteins, it binds directly to 16S rRNA central domain where it helps coordinate assembly of the platform of the 30S subunit. In Cupriavidus metallidurans (strain ATCC 43123 / DSM 2839 / NBRC 102507 / CH34) (Ralstonia metallidurans), this protein is Small ribosomal subunit protein uS8.